The chain runs to 1888 residues: Eukaryotic translation initiation factor 4G (1888 aa).

Disordered regions lie at residues 1 to 259 (MSFN…PTTP), 391 to 420 (FDNK…TQPL), 449 to 662 (PLPS…SLQH), 726 to 761 (VAHS…KNSE), 838 to 903 (ADVS…DGEV), 961 to 1042 (AYKR…SGDR), 1083 to 1138 (TNVS…DPRL), 1331 to 1356 (GERE…EREE), 1462 to 1605 (KWQQ…PGDL), and 1639 to 1691 (RFAG…PSLP). Polar residues-rich tracts occupy residues 13–36 (GYTQ…SGTH) and 75–84 (VNSTDSSNAP). Positions 171-183 (DEQKRDQARHESF) are enriched in basic and acidic residues. Residues 185-195 (PVPPMPIPLAP) are compositionally biased toward pro residues. 4 stretches are compositionally biased toward polar residues: residues 211 to 231 (NVGQ…NTGD), 244 to 259 (ASPN…PTTP), 393 to 405 (NKQS…TGTS), and 458 to 475 (NSQP…SQNV). The segment covering 497-506 (PNREHTRDTH) has biased composition (basic and acidic residues). The segment covering 586–596 (IKSSPVISKQF) has biased composition (polar residues). The span at 603 to 630 (VSLESQDSSSVQSSLTASSEESELAVAH) shows a compositional bias: low complexity. Residues 631–645 (SEVRRENLLGSDLHK) are compositionally biased toward basic and acidic residues. Residues 840–850 (VSASVSSSSTV) are compositionally biased toward low complexity. Residues 869-885 (NMSSNEVLKNVVKSDQP) are compositionally biased toward polar residues. Basic and acidic residues predominate over residues 963-983 (KRPEEKKETVAHSESIERTES). Residues 1048 to 1093 (KKYSRDFLLKFAEQFLDLPHNFEVTSDIESLMSTHTNVSHHHDRDP) form an EIF4E-binding region. The span at 1109-1124 (RLDRRGSNLVDDDRWS) shows a compositional bias: basic and acidic residues. One can recognise an MIF4G domain in the interval 1239–1462 (QRQLKAILNK…KDAIDLRKNK (224 aa)). Basic and acidic residues-rich tracts occupy residues 1467–1484 (RKVE…DAAQ) and 1661–1674 (KDLR…DRSR). Residues 1700-1824 (RLQQLSLTAI…SLREVADLIC (125 aa)) form the MI domain.

Belongs to the eukaryotic initiation factor 4G family. In terms of assembly, EIF4F is a multi-subunit complex, the composition of which varies with external and internal environmental conditions. It is composed of at least EIF4A, EIF4E and EIF4G. Interacts directly with eIF4E. In higher plants two isoforms of EIF4F have been identified, named isoform EIF4F and isoform EIF(iso)4F. Isoform EIF4F has subunits p220 and p26, whereas isoform EIF(iso)4F has subunits p82 and p28.

In terms of biological role, component of the protein complex eIF4F, which is involved in the recognition of the mRNA cap, ATP-dependent unwinding of 5'-terminal secondary structure and recruitment of mRNA to the ribosome. The chain is Eukaryotic translation initiation factor 4G from Cucumis melo (Muskmelon).